A 257-amino-acid polypeptide reads, in one-letter code: 3-methyl-2-oxobutanoate hydroxymethyltransferase (257 aa).

Mg(2+) contacts are provided by Asp-42 and Asp-86. Residues 42–43 (DS), Asp-86, and Lys-116 contribute to the 3-methyl-2-oxobutanoate site. Glu-118 is a binding site for Mg(2+). Glu-185 functions as the Proton acceptor in the catalytic mechanism.

This sequence belongs to the PanB family. As to quaternary structure, homodecamer; pentamer of dimers. Mg(2+) is required as a cofactor.

It is found in the cytoplasm. It catalyses the reaction 3-methyl-2-oxobutanoate + (6R)-5,10-methylene-5,6,7,8-tetrahydrofolate + H2O = 2-dehydropantoate + (6S)-5,6,7,8-tetrahydrofolate. It functions in the pathway cofactor biosynthesis; (R)-pantothenate biosynthesis; (R)-pantoate from 3-methyl-2-oxobutanoate: step 1/2. Functionally, catalyzes the reversible reaction in which hydroxymethyl group from 5,10-methylenetetrahydrofolate is transferred onto alpha-ketoisovalerate to form ketopantoate. The chain is 3-methyl-2-oxobutanoate hydroxymethyltransferase from Prochlorococcus marinus (strain MIT 9215).